Reading from the N-terminus, the 453-residue chain is Probable glycine dehydrogenase (decarboxylating) subunit 1 (453 aa).

It belongs to the GcvP family. N-terminal subunit subfamily. In terms of assembly, the glycine cleavage system is composed of four proteins: P, T, L and H. In this organism, the P 'protein' is a heterodimer of two subunits.

It catalyses the reaction N(6)-[(R)-lipoyl]-L-lysyl-[glycine-cleavage complex H protein] + glycine + H(+) = N(6)-[(R)-S(8)-aminomethyldihydrolipoyl]-L-lysyl-[glycine-cleavage complex H protein] + CO2. The glycine cleavage system catalyzes the degradation of glycine. The P protein binds the alpha-amino group of glycine through its pyridoxal phosphate cofactor; CO(2) is released and the remaining methylamine moiety is then transferred to the lipoamide cofactor of the H protein. This is Probable glycine dehydrogenase (decarboxylating) subunit 1 from Dictyoglomus turgidum (strain DSM 6724 / Z-1310).